The sequence spans 95 residues: Co-chaperonin GroES (95 aa).

This sequence belongs to the GroES chaperonin family. As to quaternary structure, heptamer of 7 subunits arranged in a ring. Interacts with the chaperonin GroEL.

It localises to the cytoplasm. Functionally, together with the chaperonin GroEL, plays an essential role in assisting protein folding. The GroEL-GroES system forms a nano-cage that allows encapsulation of the non-native substrate proteins and provides a physical environment optimized to promote and accelerate protein folding. GroES binds to the apical surface of the GroEL ring, thereby capping the opening of the GroEL channel. In Rickettsia conorii (strain ATCC VR-613 / Malish 7), this protein is Co-chaperonin GroES.